A 390-amino-acid polypeptide reads, in one-letter code: Malonyl-CoA-acyl carrier protein transacylase, mitochondrial (390 aa).

The transit peptide at 1 to 21 directs the protein to the mitochondrion; it reads MSVRVARVAWVRGLGASYRRG. Active-site residues include Ser153 and His270. An N6-succinyllysine modification is found at Lys314.

The protein belongs to the type II malonyltransferase family.

Its subcellular location is the mitochondrion. It carries out the reaction holo-[ACP] + malonyl-CoA = malonyl-[ACP] + CoA. The protein operates within lipid metabolism; fatty acid biosynthesis. Its function is as follows. Catalyzes the transfer of a malonyl moiety from malonyl-CoA to the free thiol group of the phosphopantetheine arm of the mitochondrial ACP protein (NDUFAB1). This suggests the existence of the biosynthesis of fatty acids in mitochondria. Also acts as a mitochondrial small ribosomal subunit (mt-SSU) assembly factor. The protein is Malonyl-CoA-acyl carrier protein transacylase, mitochondrial of Homo sapiens (Human).